A 460-amino-acid polypeptide reads, in one-letter code: Bifunctional protein GlmU (460 aa).

Residues 1-229 (MTNYAIILAA…FNESLGVNDR (229 aa)) form a pyrophosphorylase region. Residues 8–11 (LAAG), K22, Q72, and 77–78 (GT) contribute to the UDP-N-acetyl-alpha-D-glucosamine site. Position 102 (D102) interacts with Mg(2+). G139, E154, N169, and N227 together coordinate UDP-N-acetyl-alpha-D-glucosamine. N227 lines the Mg(2+) pocket. Positions 230 to 250 (VALAIAETVMRQRITQKHMVN) are linker. Positions 251–460 (GVTFQNPETV…RLAHHPSRSK (210 aa)) are N-acetyltransferase. UDP-N-acetyl-alpha-D-glucosamine is bound by residues R332 and K350. H362 (proton acceptor) is an active-site residue. The UDP-N-acetyl-alpha-D-glucosamine site is built by Y365 and N376. Acetyl-CoA-binding positions include A379, 385-386 (NY), S404, A422, and R439.

The protein in the N-terminal section; belongs to the N-acetylglucosamine-1-phosphate uridyltransferase family. This sequence in the C-terminal section; belongs to the transferase hexapeptide repeat family. In terms of assembly, homotrimer. Mg(2+) is required as a cofactor.

It localises to the cytoplasm. It carries out the reaction alpha-D-glucosamine 1-phosphate + acetyl-CoA = N-acetyl-alpha-D-glucosamine 1-phosphate + CoA + H(+). The enzyme catalyses N-acetyl-alpha-D-glucosamine 1-phosphate + UTP + H(+) = UDP-N-acetyl-alpha-D-glucosamine + diphosphate. It functions in the pathway nucleotide-sugar biosynthesis; UDP-N-acetyl-alpha-D-glucosamine biosynthesis; N-acetyl-alpha-D-glucosamine 1-phosphate from alpha-D-glucosamine 6-phosphate (route II): step 2/2. Its pathway is nucleotide-sugar biosynthesis; UDP-N-acetyl-alpha-D-glucosamine biosynthesis; UDP-N-acetyl-alpha-D-glucosamine from N-acetyl-alpha-D-glucosamine 1-phosphate: step 1/1. The protein operates within bacterial outer membrane biogenesis; LPS lipid A biosynthesis. In terms of biological role, catalyzes the last two sequential reactions in the de novo biosynthetic pathway for UDP-N-acetylglucosamine (UDP-GlcNAc). The C-terminal domain catalyzes the transfer of acetyl group from acetyl coenzyme A to glucosamine-1-phosphate (GlcN-1-P) to produce N-acetylglucosamine-1-phosphate (GlcNAc-1-P), which is converted into UDP-GlcNAc by the transfer of uridine 5-monophosphate (from uridine 5-triphosphate), a reaction catalyzed by the N-terminal domain. This chain is Bifunctional protein GlmU, found in Streptococcus pyogenes serotype M1.